Here is a 557-residue protein sequence, read N- to C-terminus: 2-succinyl-5-enolpyruvyl-6-hydroxy-3-cyclohexene-1-carboxylate synthase (557 aa).

The protein belongs to the TPP enzyme family. MenD subfamily. Homodimer. Mg(2+) serves as cofactor. Requires Mn(2+) as cofactor. The cofactor is thiamine diphosphate.

The catalysed reaction is isochorismate + 2-oxoglutarate + H(+) = 5-enolpyruvoyl-6-hydroxy-2-succinyl-cyclohex-3-ene-1-carboxylate + CO2. It functions in the pathway quinol/quinone metabolism; 1,4-dihydroxy-2-naphthoate biosynthesis; 1,4-dihydroxy-2-naphthoate from chorismate: step 2/7. The protein operates within quinol/quinone metabolism; menaquinone biosynthesis. Its function is as follows. Catalyzes the thiamine diphosphate-dependent decarboxylation of 2-oxoglutarate and the subsequent addition of the resulting succinic semialdehyde-thiamine pyrophosphate anion to isochorismate to yield 2-succinyl-5-enolpyruvyl-6-hydroxy-3-cyclohexene-1-carboxylate (SEPHCHC). The chain is 2-succinyl-5-enolpyruvyl-6-hydroxy-3-cyclohexene-1-carboxylate synthase from Staphylococcus aureus (strain MRSA252).